A 55-amino-acid chain; its full sequence is Lantibiotic epilancin (55 aa).

Residues 1 to 24 (MNNSLFDLNLNKGVETQKSDLSPQ) constitute a propeptide, cleaved by ElxP. D-lactate; by the dehydratase ElxB and the dehydrogenase ElxO is present on Ser-25. Ser-27 carries the 2,3-didehydroalanine (Ser); by the dehydratase ElxB modification. At Thr-31 the chain carries 2,3-didehydrobutyrine; by the dehydratase ElxB. Ser-32 carries the 2,3-didehydroalanine (Ser); by the dehydratase ElxB modification. Residues 36-40 (SKKYC) constitute a cross-link (lanthionine (Ser-Cys); by the dehydratase ElxB and the cyclase ElxC). 2 consecutive cross-links (beta-methyllanthionine (Thr-Cys); by the dehydratase ElxB and the cyclase ElxC) follow at residues 44-47 (TLTC) and 46-49 (TCGC). A 2,3-didehydrobutyrine; by the dehydratase ElxB modification is found at Thr-52.

It belongs to the type A lantibiotic family. Post-translationally, maturation of this lantibiotic involves the enzymatic conversion of Thr, and Ser into dehydrated AA by ElxB and the formation of thioether bonds with cysteine by the cyclase ElxC. The next steps are cleavage of the leader peptide by ElxP and membrane translocation by ElxT. The leader peptide may be removed before membrane translocation, in contrast to other lantibiotics for which the cleavage occur after translocation. This is suggested by the probable cytoplasmic localization of the serine protease ElxP that cleaves the leader peptide. It is not established whether the 2,3-didehydrobutyrine is the E- or Z-isomer. In terms of processing, the N-terminal D-lactate is probably produced by dehydration of Ser-25 by ElxB, followed by proteolytic removal of the leader peptide by the serine protease ElxP and hydrolysis of the resulting new N-terminal dehydroalanine. This hydrolysis may occur spontaneously. The pyruvate group thus formed is reduced to D-lactate by the NADPH-dependent oxidoreductase ElxO. This N-terminal D-lactate protects the lantibiotic against degradation against aminopeptidase.

In terms of biological role, lanthionine-containing peptide antibiotic (lantibiotic) active on Gram-positive bacteria such as staphylococci, enterococci and streptococci. The bactericidal activity of lantibiotics is based on depolarization of energized bacterial cytoplasmic membranes, initiated by the formation of aqueous transmembrane pores. In Staphylococcus epidermidis, this protein is Lantibiotic epilancin (elkA).